The following is a 351-amino-acid chain: Methionine import ATP-binding protein MetN (351 aa).

An ABC transporter domain is found at 4 to 249 (VQLDHVSVTF…PKAELTQKFV (246 aa)). Residue 41–48 (GFSGAGKS) coordinates ATP.

This sequence belongs to the ABC transporter superfamily. Methionine importer (TC 3.A.1.24) family. The complex is composed of two ATP-binding proteins (MetN), two transmembrane proteins (MetI) and a solute-binding protein (MetQ).

It localises to the cell membrane. The catalysed reaction is L-methionine(out) + ATP + H2O = L-methionine(in) + ADP + phosphate + H(+). The enzyme catalyses D-methionine(out) + ATP + H2O = D-methionine(in) + ADP + phosphate + H(+). Its function is as follows. Part of the ABC transporter complex MetNIQ involved in methionine import. Responsible for energy coupling to the transport system. The chain is Methionine import ATP-binding protein MetN from Lactobacillus delbrueckii subsp. bulgaricus (strain ATCC BAA-365 / Lb-18).